Reading from the N-terminus, the 270-residue chain is Phosphatidylglycerol--prolipoprotein diacylglyceryl transferase (270 aa).

The next 4 membrane-spanning stretches (helical) occupy residues 19 to 39 (FPVY…LWLA), 56 to 76 (LVLI…VIFE), 92 to 112 (QGGL…ILFA), and 116 to 136 (GVSF…GQAI). A 1,2-diacyl-sn-glycero-3-phospho-(1'-sn-glycerol) is bound at residue R138. Transmembrane regions (helical) follow at residues 178–198 (HPTF…LLAL), 206–226 (GELF…VEGL), and 236–256 (LRIA…FIIV).

It belongs to the Lgt family.

It is found in the cell membrane. It catalyses the reaction L-cysteinyl-[prolipoprotein] + a 1,2-diacyl-sn-glycero-3-phospho-(1'-sn-glycerol) = an S-1,2-diacyl-sn-glyceryl-L-cysteinyl-[prolipoprotein] + sn-glycerol 1-phosphate + H(+). The protein operates within protein modification; lipoprotein biosynthesis (diacylglyceryl transfer). Its function is as follows. Catalyzes the transfer of the diacylglyceryl group from phosphatidylglycerol to the sulfhydryl group of the N-terminal cysteine of a prolipoprotein, the first step in the formation of mature lipoproteins. This chain is Phosphatidylglycerol--prolipoprotein diacylglyceryl transferase, found in Bacillus cereus (strain ZK / E33L).